Consider the following 224-residue polypeptide: MGSKNKLRRFKENEKFENVIQPSREELTDNVFELKGKWSENFFKNDHPIVLELGCGKGEYTVELARKNPDKNFIGIDIKGARFWRGAKTALEEGLDNVAFIRTQIELIEYVFATNEVSEIWITFPDPQIKYKRTKHRLTNTDFLQRYKNVLKQDGIMHLKTDSEFMHGYTLGLLHGEGHEILYAHHDIYKNEYSPKEVTGIQTFYENQYLENGKPITYIRFKIK.

Residues Glu-52, Asp-77, and Asp-126 each contribute to the S-adenosyl-L-methionine site. Residue Asp-126 is part of the active site. The substrate site is built by Lys-130 and Asp-162.

The protein belongs to the class I-like SAM-binding methyltransferase superfamily. TrmB family.

The enzyme catalyses guanosine(46) in tRNA + S-adenosyl-L-methionine = N(7)-methylguanosine(46) in tRNA + S-adenosyl-L-homocysteine. It participates in tRNA modification; N(7)-methylguanine-tRNA biosynthesis. Its function is as follows. Catalyzes the formation of N(7)-methylguanine at position 46 (m7G46) in tRNA. In Christiangramia forsetii (strain DSM 17595 / CGMCC 1.15422 / KT0803) (Gramella forsetii), this protein is tRNA (guanine-N(7)-)-methyltransferase.